We begin with the raw amino-acid sequence, 136 residues long: Histone H3.1/H3.2 (136 aa).

The disordered stretch occupies residues 1-43 (MARTKQTARKSTGGKAPRKQLASKAARKSAPSTGGVKKPHRYK). Lys5 is modified (N6,N6,N6-trimethyllysine; alternate). Lys5 carries the post-translational modification N6,N6-dimethyllysine; alternate. Residues Lys5 and Lys10 each carry the N6-methyllysine; alternate modification. Lys10 carries the post-translational modification N6-acetyllysine; alternate. The residue at position 11 (Ser11) is a Phosphoserine. The residue at position 15 (Lys15) is an N6,N6-dimethyllysine; alternate. Lys15, Lys19, Lys24, Lys28, and Lys37 each carry N6-acetyllysine; alternate. N6-methyllysine; alternate is present on residues Lys19, Lys24, Lys28, and Lys37. N6,N6,N6-trimethyllysine; alternate is present on residues Lys28 and Lys37. An N6,N6-dimethyllysine; alternate mark is found at Lys28 and Lys37. Lys57 and Lys65 each carry N6-acetyllysine. Lys80 bears the N6,N6,N6-trimethyllysine; alternate mark. Lys80 carries the post-translational modification N6,N6-dimethyllysine; alternate. Lys80 is subject to N6-methyllysine; alternate.

The protein belongs to the histone H3 family. The nucleosome is a histone octamer containing two molecules each of H2A, H2B, H3 and H4 assembled in one H3-H4 heterotetramer and two H2A-H2B heterodimers. The octamer wraps approximately 147 bp of DNA. Post-translationally, phosphorylated to form H3S10ph. H3S10ph promotes subsequent H3K14ac formation and is required for transcriptional activation through TBP recruitment to the promoters. Mono-, di- and trimethylated by the COMPASS complex to form H3K4me1/2/3. H3K4me activates gene expression by regulating transcription elongation and plays a role in telomere length maintenance. H3K4me enrichment correlates with transcription levels, and occurs in a 5' to 3' gradient with H3K4me3 enrichment at the 5'-end of genes, shifting to H3K4me2 and then H3K4me1. Methylated by SET2 to form H3K36me. H3K36me represses gene expression. Methylated by DOT1 to form H3K79me. H3K79me is required for association of SIR proteins with telomeric regions and for telomeric silencing. The COMPASS-mediated formation of H3K4me2/3 and the DOT1-mediated formation of H3K79me require H2BK123ub1. In terms of processing, acetylation of histone H3 leads to transcriptional activation. H3K14ac formation by GCN5 is promoted by H3S10ph. H3K14ac can also be formed by ESA1. H3K56ac formation occurs predominantly in newly synthesized H3 molecules during G1, S and G2/M of the cell cycle and may be involved in DNA repair.

It is found in the nucleus. Its subcellular location is the chromosome. Functionally, core component of nucleosome. Nucleosomes wrap and compact DNA into chromatin, limiting DNA accessibility to the cellular machineries which require DNA as a template. Histones thereby play a central role in transcription regulation, DNA repair, DNA replication and chromosomal stability. DNA accessibility is regulated via a complex set of post-translational modifications of histones, also called histone code, and nucleosome remodeling. The chain is Histone H3.1/H3.2 (HHT1) from Lodderomyces elongisporus (strain ATCC 11503 / CBS 2605 / JCM 1781 / NBRC 1676 / NRRL YB-4239) (Yeast).